An 844-amino-acid polypeptide reads, in one-letter code: Cell division cycle 5-like protein (844 aa).

2 HTH myb-type domains span residues 2 to 57 (RIMI…DPSI) and 58 to 107 (KKTE…DAAC). DNA-binding regions (H-T-H motif) lie at residues 30-53 (WARISSLLVRKSAKQCKARWYEWL) and 81-103 (WRTIAPIVGRTPSQCLERYEKLL). The segment covering 113-126 (YDAADDPRKLRPGE) has biased composition (basic and acidic residues). A disordered region spans residues 113-147 (YDAADDPRKLRPGEIDPNPEAKPARPDPVDMDEDE). Residues 145-189 (EDEKEMLSEARARLANTRGKKAKRKAREKQLEEARRLASLQKRRE) are a coiled coil. Residue Thr-343 is modified to Phosphothreonine. The tract at residues 379–514 (QTPLLGGENP…PEEKIEEDMS (136 aa)) is disordered. 2 stretches are compositionally biased toward polar residues: residues 406–416 (QTPNPMLTPSM) and 433–442 (RDGSSFSMTP). The span at 446–475 (PFRDELHINEDMDMHESAKLERQRREEARR) shows a compositional bias: basic and acidic residues. Over residues 500–513 (EESEEPEEKIEEDM) the composition is skewed to acidic residues. The stretch at 685-723 (GNADKVAAFQEEMENVRKKMEEDEKKAEHMKAKYKTYTK) forms a coiled coil.

Belongs to the CEF1 family. Component of the multiprotein assembly MOS4-associated complex (MAC) at least composed of MOS4, CDC5, PRL1 and PRP19. Interacts with PRL1, MOS4 and PRP19A. Associated with the spliceosome. In terms of tissue distribution, expressed extensively in shoot and root meristems.

The protein resides in the nucleus. In terms of biological role, component of the MAC complex that probably regulates defense responses through transcriptional control and thereby is essential for plant innate immunity. Possesses a sequence specific DNA sequence 'CTCAGCG' binding activity. Involved in mRNA splicing and cell cycle control. May also play a role in the response to DNA damage. This chain is Cell division cycle 5-like protein (CDC5), found in Arabidopsis thaliana (Mouse-ear cress).